Consider the following 430-residue polypeptide: Gamma-glutamyl phosphate reductase (430 aa).

This sequence belongs to the gamma-glutamyl phosphate reductase family.

It localises to the cytoplasm. It catalyses the reaction L-glutamate 5-semialdehyde + phosphate + NADP(+) = L-glutamyl 5-phosphate + NADPH + H(+). It participates in amino-acid biosynthesis; L-proline biosynthesis; L-glutamate 5-semialdehyde from L-glutamate: step 2/2. In terms of biological role, catalyzes the NADPH-dependent reduction of L-glutamate 5-phosphate into L-glutamate 5-semialdehyde and phosphate. The product spontaneously undergoes cyclization to form 1-pyrroline-5-carboxylate. In Polaromonas naphthalenivorans (strain CJ2), this protein is Gamma-glutamyl phosphate reductase.